Reading from the N-terminus, the 184-residue chain is MIVPISLLFLFLSFVPFSYSATCDFENEVASMSWMVKGDVLQINFEHKNLTENRWASIAFGNGPGMTNLESIIFSRDDNNVITTNTGFTPKKKKVVVDDVSYVTVRNVQLKGDLLRITVTRPLGPAGPRDFSLDQCVNWIVVPGGALSNGKFKKHHGQIYFVKDVCAAKCTAQRMMRVLSNRIH.

Positions 1–20 are cleaved as a signal peptide; sequence MIVPISLLFLFLSFVPFSYS. Residues 28–145 enclose the DOMON domain; it reads EVASMSWMVK…CVNWIVVPGG (118 aa). The N-linked (GlcNAc...) asparagine glycan is linked to N49.

Its subcellular location is the secreted. The polypeptide is DOMON domain-containing protein CBG21755 (Caenorhabditis briggsae).